We begin with the raw amino-acid sequence, 142 residues long: Hemoglobin subunit alpha-A (142 aa).

A Globin domain is found at 2 to 142 (VLSANDKTNV…VGNVLTAKYR (141 aa)). His-59 is a binding site for O2. His-88 contributes to the heme b binding site.

This sequence belongs to the globin family. Heterotetramer of two alpha chains and two beta chains. Red blood cells.

Involved in oxygen transport from the lung to the various peripheral tissues. In Aegypius monachus (Cinereous vulture), this protein is Hemoglobin subunit alpha-A (HBAA).